Reading from the N-terminus, the 163-residue chain is Cyanate hydratase (163 aa).

Catalysis depends on residues Arg-103, Glu-106, and Ser-129.

This sequence belongs to the cyanase family.

It catalyses the reaction cyanate + hydrogencarbonate + 3 H(+) = NH4(+) + 2 CO2. Its function is as follows. Catalyzes the reaction of cyanate with bicarbonate to produce ammonia and carbon dioxide. The chain is Cyanate hydratase from Ajellomyces capsulatus (strain G186AR / H82 / ATCC MYA-2454 / RMSCC 2432) (Darling's disease fungus).